The primary structure comprises 101 residues: UPF0473 protein SUB1774 (101 aa).

The protein belongs to the UPF0473 family.

This Streptococcus uberis (strain ATCC BAA-854 / 0140J) protein is UPF0473 protein SUB1774.